The sequence spans 1989 residues: Zinc finger C3H1 domain-containing protein (1989 aa).

Disordered stretches follow at residues 1–133 (MATA…RPSF), 148–218 (GRPY…SKNE), 251–290 (SSKE…PEEK), and 310–365 (LPGD…LGED). A2 is subject to N-acetylalanine. S15, S28, and S34 each carry phosphoserine. The span at 20 to 32 (GELEDGEISDDDN) shows a compositional bias: acidic residues. A compositionally biased stretch (low complexity) spans 33–44 (NSQIRSRSSSSS). A compositionally biased stretch (gly residues) spans 62–72 (RGGGSGGGGGS). Composition is skewed to low complexity over residues 114–132 (PPSV…PRPS), 183–192 (GFSSSQSWRE), and 201–210 (KSFGRSPSRK). The residue at position 128 (S128) is a Phosphoserine. A coiled-coil region spans residues 219 to 259 (NCVEETFEDLLLKYKQIQLELECINKDEKLALSSKEENVQE). S251 carries the post-translational modification Phosphoserine. Residues 251–262 (SSKEENVQEDPK) show a composition bias toward basic and acidic residues. The segment covering 266–279 (FEDQTSTDNVSITK) has biased composition (polar residues). Residues 280–290 (DSSKEVAPEEK) show a composition bias toward basic and acidic residues. Residues 330–340 (KSDTTDSSQGL) are compositionally biased toward polar residues. A phosphoserine mark is found at S352 and S383. A coiled-coil region spans residues 358-389 (SEKKLGEDEEELSELQLRLLALQSASKKWQQK). Disordered stretches follow at residues 385–671 (KWQQ…SNLS) and 711–770 (LNDS…PEAL). Residues 392-402 (QVMKESKEKLT) are compositionally biased toward basic and acidic residues. Basic residues predominate over residues 430–440 (ALRKQQTKAWK). A coiled-coil region spans residues 432 to 487 (RKQQTKAWKKLQQQKEQERQKEEDQRKQAEEEERRKREEEIRKIRDLSNQEEQYNR). Composition is skewed to basic and acidic residues over residues 444-479 (QQKE…RDLS) and 501-515 (KSSD…DKQP). The segment covering 527–537 (NYEEVAMDTDS) has biased composition (acidic residues). Residues 574–583 (VSSLPPLSQP) are compositionally biased toward low complexity. A compositionally biased stretch (pro residues) spans 594–616 (PLPPLPPLPPLPPEDPEQPPKPP). Polar residues predominate over residues 647-671 (TSSNSDPPSPPVLNNSHPVPRSNLS). A phosphoserine mark is found at S662, S714, S717, and S719. Residues 755–770 (PKSEKENDPLRTPEAL) show a composition bias toward basic and acidic residues. T766 carries the phosphothreonine modification. Phosphoserine is present on residues S805 and S809. Positions 847–909 (LKNLVQQEAK…QQRVTIKKAL (63 aa)) form a coiled coil. 3 positions are modified to phosphoserine: S948, S949, and S953. Residues 965–989 (EKRRLQKLEYEYALKIQKLKEARAL) adopt a coiled-coil conformation. S998 and S1046 each carry phosphoserine. The segment at 1185–1206 (FCRFDLTGTCNDDDCQWQHIQD) adopts a C3H1-type zinc-finger fold. Residues S1301, S1303, and S1304 each carry the phosphoserine modification. 7 TPR repeats span residues 1361 to 1400 (VQLW…NKDN), 1401 to 1434 (PEIW…APDY), 1438 to 1471 (WTFL…ETSN), 1478 to 1511 (LEAL…ANDG), 1602 to 1635 (LPLY…CPIN), 1636 to 1669 (CQLL…NPQN), and 1745 to 1778 (PYLW…AMRC).

Component of the poly(A) tail exosome targeting (PAXT) complex made of accessory factors, such as PABPN1, ZFC3H1 and MTREX, and which directs a subset of long and polyadenylated poly(A) RNAs for exosomal degradation. Co-localizes with component of the CBC-ARS2 (CBCA) complex. Binds to RNA exosome components. Interacts with NCBP1/CBP80, ZC3H18, MTREX and PABPN1 in a RNase-insensitive manner, and with PABPC4, PABPC1 and ZC3H14 in a RNase-sensitive manner.

The protein localises to the nucleus. In terms of biological role, subunit of the trimeric poly(A) tail exosome targeting (PAXT) complex, a complex that directs a subset of long and polyadenylated poly(A) RNAs for exosomal degradation. The RNA exosome is fundamental for the degradation of RNA in eukaryotic nuclei. Substrate targeting is facilitated by its cofactor MTREX, which links to RNA-binding protein adapters. This Homo sapiens (Human) protein is Zinc finger C3H1 domain-containing protein (ZFC3H1).